The chain runs to 151 residues: Small ribosomal subunit protein uS13 (151 aa).

The tract at residues 131 to 151 (RGQRTKSSFRRGRTVGVKKKQ) is disordered. Over residues 133 to 151 (QRTKSSFRRGRTVGVKKKQ) the composition is skewed to basic residues.

It belongs to the universal ribosomal protein uS13 family. As to quaternary structure, part of the 30S ribosomal subunit. Forms a loose heterodimer with protein S19. Forms two bridges to the 50S subunit in the 70S ribosome.

Functionally, located at the top of the head of the 30S subunit, it contacts several helices of the 16S rRNA. In the 70S ribosome it contacts the 23S rRNA (bridge B1a) and protein L5 of the 50S subunit (bridge B1b), connecting the 2 subunits; these bridges are implicated in subunit movement. This Methanopyrus kandleri (strain AV19 / DSM 6324 / JCM 9639 / NBRC 100938) protein is Small ribosomal subunit protein uS13.